Consider the following 163-residue polypeptide: Photosystem II extrinsic protein V (163 aa).

Positions 1–26 (MFRRLIGVVVATALLTFQLIVGSATA) are cleaved as a signal peptide. Positions 63, 66, 67, and 118 each coordinate heme c.

This sequence belongs to the cytochrome c family. PsbV subfamily. PSII is composed of 1 copy each of membrane proteins PsbA, PsbB, PsbC, PsbD, PsbE, PsbF, PsbH, PsbI, PsbJ, PsbK, PsbL, PsbM, PsbT, PsbX, PsbY, PsbZ, Psb30/Ycf12, peripheral proteins PsbO, CyanoQ (PsbQ), PsbU, PsbV and a large number of cofactors. It forms dimeric complexes. Heme c serves as cofactor.

The protein localises to the cellular thylakoid membrane. Functionally, one of the extrinsic, lumenal subunits of photosystem II (PSII). PSII is a light-driven water plastoquinone oxidoreductase, using light energy to abstract electrons from H(2)O, generating a proton gradient subsequently used for ATP formation. The extrinsic proteins stabilize the structure of photosystem II oxygen-evolving complex (OEC), the ion environment of oxygen evolution and protect the OEC against heat-induced inactivation. Low-potential cytochrome c that plays a role in the OEC of PSII. In Nostoc sp. (strain PCC 7120 / SAG 25.82 / UTEX 2576), this protein is Photosystem II extrinsic protein V.